The sequence spans 155 residues: Ribosomal RNA large subunit methyltransferase H (155 aa).

S-adenosyl-L-methionine-binding positions include Leu72, Gly103, and 122-127 (LSPLTL).

It belongs to the RNA methyltransferase RlmH family. Homodimer.

The protein localises to the cytoplasm. The catalysed reaction is pseudouridine(1915) in 23S rRNA + S-adenosyl-L-methionine = N(3)-methylpseudouridine(1915) in 23S rRNA + S-adenosyl-L-homocysteine + H(+). Its function is as follows. Specifically methylates the pseudouridine at position 1915 (m3Psi1915) in 23S rRNA. This is Ribosomal RNA large subunit methyltransferase H from Haemophilus ducreyi (strain 35000HP / ATCC 700724).